Consider the following 184-residue polypeptide: ATP-dependent protease subunit HslV (184 aa).

The active site involves Thr12. Na(+) is bound by residues Ala166, Cys169, and Thr172.

Belongs to the peptidase T1B family. HslV subfamily. In terms of assembly, a double ring-shaped homohexamer of HslV is capped on each side by a ring-shaped HslU homohexamer. The assembly of the HslU/HslV complex is dependent on binding of ATP.

The protein localises to the cytoplasm. It carries out the reaction ATP-dependent cleavage of peptide bonds with broad specificity.. Allosterically activated by HslU binding. Protease subunit of a proteasome-like degradation complex believed to be a general protein degrading machinery. This chain is ATP-dependent protease subunit HslV, found in Brucella abortus (strain S19).